Reading from the N-terminus, the 142-residue chain is Glia maturation factor beta (142 aa).

N-acetylserine is present on serine 2. Positions 4-139 constitute an ADF-H domain; the sequence is SLVVCDVAED…TEEWLREKLG (136 aa).

The protein belongs to the actin-binding proteins ADF family. GMF subfamily. Phosphorylated; stimulated by phorbol ester.

Its function is as follows. This protein causes differentiation of brain cells, stimulation of neural regeneration, and inhibition of proliferation of tumor cells. In Homo sapiens (Human), this protein is Glia maturation factor beta (GMFB).